Reading from the N-terminus, the 1846-residue chain is Peripheral-type benzodiazepine receptor-associated protein 1 (1846 aa).

3 disordered regions span residues 57–97, 281–318, and 560–628; these read EESS…GYSC, NQRE…DDVE, and GPKD…SEVE. Positions 576–587 are enriched in polar residues; the sequence is PKSSEPALTTLT. Over residues 599-612 the composition is skewed to low complexity; the sequence is SLSNSSRSESIHNS. The SH3 1 domain maps to 649–716; that stretch reads ARIQVFLARY…PSNFVERVSD (68 aa). A disordered region spans residues 726-785; the sequence is ELADSSHSSGPELSFLSGGGGGCSSGGQSSGGRSQPRPEEEAAGDELSLSPPPEGLGEPL. A compositionally biased stretch (gly residues) spans 742–755; it reads SGGGGGCSSGGQSS. Fibronectin type-III domains lie at 787–878, 880–972, and 977–1075; these read VPYP…AGAG, VPSQ…TLPA, and APLD…PALA. 7 disordered regions span residues 1084–1107, 1163–1219, 1243–1302, 1322–1476, 1492–1617, 1704–1755, and 1812–1846; these read SCLS…GLGD, EPTL…LDSG, HSRN…SDEE, SIPE…PESS, YDSE…QDLP, LTEA…AAQK, and VPSN…RVQC. Over residues 1202–1219 the composition is skewed to basic and acidic residues; that stretch reads TQKKPSIEACHGGDLDSG. The span at 1251–1265 shows a compositional bias: acidic residues; it reads DIQEEEEEEEEEEEE. A compositionally biased stretch (polar residues) spans 1270-1283; it reads PCSSQKQVAGNSIR. Over residues 1324-1335 the composition is skewed to acidic residues; that stretch reads PEEEEEEEEEEG. 2 stretches are compositionally biased toward basic and acidic residues: residues 1411-1420 and 1545-1577; these read RPQDPREHCS and AWEK…ESRG. In terms of domain architecture, SH3 2 spans 1616–1684; the sequence is LPVRVFVALF…PCNMVAEVAV (69 aa). Positions 1705-1719 are enriched in polar residues; that stretch reads TEASGNGPSVYSSAH. The SH3 3 domain maps to 1755 to 1822; sequence KTSRPMVAAF…PSNFLEGPGP (68 aa). The segment covering 1817–1830 has biased composition (low complexity); it reads LEGPGPESGSLESG.

Belongs to the RIMBP family. In terms of assembly, interacts with RIMS1 and RIMS2. Interacts with TSPO. Interacts with CACNA1A. Predominantly expressed in the brain.

Its subcellular location is the cytoplasm. It localises to the mitochondrion. Required for synaptic transmission regulation. It probably controls the recruitement of voltage-gated calcium channels to the presynaptic membrane, and modulates neurotransmitter release. This Mus musculus (Mouse) protein is Peripheral-type benzodiazepine receptor-associated protein 1.